The chain runs to 496 residues: Probable CtpA-like serine protease (496 aa).

Residues 1-16 (MDDKQHTSSSDDERAE) are compositionally biased toward basic and acidic residues. The segment at 1-27 (MDDKQHTSSSDDERAEIATSNQDQETN) is disordered. The segment covering 18 to 27 (ATSNQDQETN) has biased composition (polar residues). The helical transmembrane segment at 39–59 (FISILIGTILITAVITVVAYI) threads the bilayer. A PDZ domain is found at 124–206 (TKSFNEGVSG…TEVTLTVQRG (83 aa)). Residues Ser-329, Asp-340, and Lys-354 each act as charge relay system in the active site.

This sequence belongs to the peptidase S41A family.

Its subcellular location is the cell membrane. The protein is Probable CtpA-like serine protease of Staphylococcus aureus (strain MSSA476).